The following is a 324-amino-acid chain: Transcriptional regulator protein Pur-beta (324 aa).

Residues 1-47 form a disordered region; sequence MADGDSGSERGGGGGGGGGPGGFQPAPRGGGGGGGGPGGEQETQELA. An N-acetylalanine modification is found at alanine 2. A phosphoserine mark is found at serine 6 and serine 8. Over residues 9-39 the composition is skewed to gly residues; sequence ERGGGGGGGGGPGGFQPAPRGGGGGGGGPGG. Residue arginine 28 is modified to Omega-N-methylarginine. The segment at 37–263 is DNA-binding; that stretch reads PGGEQETQEL…GVFLRVSEVK (227 aa). Residue threonine 43 is modified to Phosphothreonine. Serine 113 is subject to Phosphoserine. Arginine 164 carries the post-translational modification Omega-N-methylarginine. Residue lysine 279 is modified to N6-acetyllysine. Residues 297-307 show a composition bias toward basic and acidic residues; it reads RQRDKLYERRG. The interval 297–324 is disordered; that stretch reads RQRDKLYERRGGGSGGGDESEGEEVDED. Omega-N-methylarginine is present on arginine 306. Phosphoserine occurs at positions 310 and 316. The segment covering 314–324 has biased composition (acidic residues); it reads DESEGEEVDED.

It belongs to the PUR DNA-binding protein family. As to quaternary structure, homodimer, heterodimer with PURA and heterotrimer with PURA and YBX1/Y-box protein 1. Interacts with MYOCD and SRF.

It is found in the nucleus. In terms of biological role, transcriptional regulator which can act as an activator or a repressor. Represses the transcription of ACTA2 in fibroblasts and smooth muscle cells via its ability to interact with the purine-rich strand of a MCAT-containing element in the 5' flanking region of the gene. Represses the transcription of MYOCD, capable of repressing all isoforms of MYOCD but the magnitude of the repressive effects is most notable for the SMC-specific isoforms. Promotes hepatic glucose production by activating the transcription of ADCY6, leading to cAMP accumulation, increased PKA activity, CREB activation, and increased transcription of PCK1 and G6PC genes. Has capacity to bind repeated elements in single-stranded DNA such as the purine-rich single strand of the PUR element located upstream of the MYC gene. Participates in transcriptional and translational regulation of alpha-MHC expression in cardiac myocytes by binding to the purine-rich negative regulatory (PNR) element. Modulates constitutive liver galectin-3 gene transcription by binding to its promoter. May play a role in the dendritic transport of a subset of mRNAs. This is Transcriptional regulator protein Pur-beta (Purb) from Mus musculus (Mouse).